Consider the following 166-residue polypeptide: Nicotine metabolites export pump subunit NepB (166 aa).

4 consecutive transmembrane segments (helical) span residues 51-71 (LHAW…TVIL), 77-97 (FQLP…FFLL), 108-128 (VAYA…GAII), and 133-153 (VTLG…ILNL).

This sequence belongs to the drug/metabolite transporter (DMT) superfamily. Small multidrug resistance (SMR) (TC 2.A.7.1) family. NepA/NepB subfamily. As to quaternary structure, the efflux pump is composed of NepA and NepB.

The protein resides in the cell membrane. Its function is as follows. Component of an efflux pump responsible for the transport of nicotine breakdown products, in particular methylamine, out of the cell. This pump apparently serves as a metabolic valve for nicotine catabolites and may protect the bacteria from the potentially toxic side effects of these compounds. This Paenarthrobacter nicotinovorans (Arthrobacter nicotinovorans) protein is Nicotine metabolites export pump subunit NepB (nepB).